The sequence spans 812 residues: Phospholipase D alpha 1 (812 aa).

One can recognise a C2 domain in the interval Met-1 to Leu-130. Residue Asp-190 coordinates Ca(2+). Positions Thr-330–Arg-368 constitute a PLD phosphodiesterase 1 domain. Catalysis depends on residues His-335, Lys-337, and Asp-342. His-335 is an a 1,2-diacyl-sn-glycero-3-phosphate binding site. Ca(2+) contacts are provided by His-374 and His-408. A 1,2-diacyl-sn-glycero-3-phosphate is bound by residues Gln-524 and His-663. Residues Phe-658 to Ser-685 enclose the PLD phosphodiesterase 2 domain. Residues His-663, Lys-665, and Asp-670 contribute to the active site. Glu-724 contributes to the Ca(2+) binding site.

It belongs to the phospholipase D family. C2-PLD subfamily. In terms of assembly, monomer. Ca(2+) is required as a cofactor.

It carries out the reaction a 1,2-diacyl-sn-glycero-3-phosphocholine + H2O = a 1,2-diacyl-sn-glycero-3-phosphate + choline + H(+). Hydrolyzes glycerol-phospholipids at the terminal phosphodiesteric bond. Plays an important role in various cellular processes. The protein is Phospholipase D alpha 1 (PLD1) of Zea mays (Maize).